The following is a 1299-amino-acid chain: Protein prickle (1299 aa).

The segment covering 1–19 (MSSLSTGGGAGGSSGGPGG) has biased composition (gly residues). 5 disordered regions span residues 1–24 (MSSL…DAAA), 115–181 (ADDG…EVTQ), 241–289 (EEES…PQVP), 368–396 (LPRH…PSSS), and 425–527 (LPPH…DDDS). Positions 145–159 (SPRRSKKLLRSLRAH) are enriched in basic residues. Polar residues predominate over residues 168 to 181 (NDTTTANESSEVTQ). Pro residues predominate over residues 263–272 (PVPPLPPPPA). Positions 425 to 434 (LPPHHQQHPG) are enriched in low complexity. Over residues 435-445 (AGMGPGPGSGA) the composition is skewed to gly residues. The segment covering 457-469 (PGCSANPKYSNAQ) has biased composition (polar residues). Residues 515–623 (MDMQRQSHSD…NVRQLMSARP (109 aa)) form the PET domain. Over residues 516–525 (DMQRQSHSDD) the composition is skewed to basic and acidic residues. 3 LIM zinc-binding domains span residues 622–686 (RPCD…ETLK), 687–747 (PRCS…MFAE), and 748–810 (YCDY…GEPP). Disordered regions lie at residues 807–865 (GEPP…HQAT), 902–940 (KDLE…GDFQ), and 1026–1249 (ADIL…SSSS). The span at 844 to 864 (PSSHASSSPPMSPQQQQQHQA) shows a compositional bias: low complexity. 2 stretches are compositionally biased toward polar residues: residues 922 to 934 (RASS…SPLN) and 1070 to 1081 (SLNTPMSTQSAS). The segment covering 1089-1101 (SILSGASSSSPMS) has biased composition (low complexity). Residues 1136-1150 (GERERDRDKDKEGGG) are compositionally biased toward basic and acidic residues. Over residues 1151-1183 (RHGHGHSSRRRRRRKSSSSSSHHRSGSGHRSHS) the composition is skewed to basic residues. Over residues 1216-1231 (SPSRQQRERERERERE) the composition is skewed to basic and acidic residues. Over residues 1238 to 1249 (VCSTCSSSSSSS) the composition is skewed to low complexity.

The protein belongs to the prickle / espinas / testin family. In terms of assembly, interacts with dsh; PET and LIM domains interact with dsh DEP domain, in wing cells. Interacts with Vang in photoreceptor cells. In terms of tissue distribution, expressed in the wing, leg and eye imaginal disks. Expressed within the photoreceptors of the eye.

The protein resides in the cell membrane. Its function is as follows. Acts in a planar cell polarity (PCP) complex; polarization along the apical/basal axis of epithelial cells. Correct expression of the alternative isoforms is required for PCP signaling in imaginal disks. PCP signaling in the wing disk requires the receptor fz and the cytoplasmic proteins dsh and pk. These act in a feedback loop leading to activation of the jnk cascade and subsequent polarized arrangement of hairs and bristles. Dgo and pk compete with one another for dsh binding, thereby modulating fz dsh activity and ensuring tight control over fz PCP signaling. Vang, stan and pk function together to regulate the establishment of tissue polarity in the adult eye. In Drosophila melanogaster (Fruit fly), this protein is Protein prickle.